A 547-amino-acid chain; its full sequence is CTP synthase (547 aa).

The segment at 1-265 (MARYVFITGG…DQAVLDAFGI (265 aa)) is amidoligase domain. Ser-13 serves as a coordination point for CTP. Ser-13 serves as a coordination point for UTP. ATP-binding positions include 14–19 (SLGKGL) and Asp-71. Mg(2+) contacts are provided by Asp-71 and Glu-139. CTP-binding positions include 146–148 (DIE), 186–191 (KTKPTQ), and Lys-222. Residues 186 to 191 (KTKPTQ) and Lys-222 each bind UTP. Residues 291–546 (RVAIVGKYTQ…IRAAVEVSRL (256 aa)) enclose the Glutamine amidotransferase type-1 domain. L-glutamine is bound at residue Gly-353. The Nucleophile; for glutamine hydrolysis role is filled by Cys-380. L-glutamine contacts are provided by residues 381 to 384 (LGMQ), Glu-404, and Arg-474. Residues His-519 and Glu-521 contribute to the active site.

It belongs to the CTP synthase family. Homotetramer.

The enzyme catalyses UTP + L-glutamine + ATP + H2O = CTP + L-glutamate + ADP + phosphate + 2 H(+). The catalysed reaction is L-glutamine + H2O = L-glutamate + NH4(+). It carries out the reaction UTP + NH4(+) + ATP = CTP + ADP + phosphate + 2 H(+). The protein operates within pyrimidine metabolism; CTP biosynthesis via de novo pathway; CTP from UDP: step 2/2. Its activity is regulated as follows. Allosterically activated by GTP, when glutamine is the substrate; GTP has no effect on the reaction when ammonia is the substrate. The allosteric effector GTP functions by stabilizing the protein conformation that binds the tetrahedral intermediate(s) formed during glutamine hydrolysis. Inhibited by the product CTP, via allosteric rather than competitive inhibition. Catalyzes the ATP-dependent amination of UTP to CTP with either L-glutamine or ammonia as the source of nitrogen. Regulates intracellular CTP levels through interactions with the four ribonucleotide triphosphates. The protein is CTP synthase of Cereibacter sphaeroides (strain ATCC 17025 / ATH 2.4.3) (Rhodobacter sphaeroides).